The chain runs to 437 residues: Aspartic proteinase nepenthesin-1 (437 aa).

Residues 1–24 (MASSLYSFLLALSIVYIFVAPTHS) form the signal peptide. The propeptide at 25–78 (TSRTALNHRHEAKVTGFQIMLEHVDSGKNLTKFQLLERAIERGSRRLQRLEAML) is activation peptide. N-linked (GlcNAc...) asparagine glycosylation is found at Asn53 and Asn98. The 336-residue stretch at 95–430 (YLMNLSIGTP…DTGNSVVSFA (336 aa)) folds into the Peptidase A1 domain. Asp113 is an active-site residue. 6 cysteine pairs are disulfide-bonded: Cys123/Cys126, Cys129/Cys203, Cys150/Cys168, Cys155/Cys163, Cys240/Cys434, and Cys354/Cys395. An N-linked (GlcNAc...) asparagine glycan is attached at Asn131. 3 N-linked (GlcNAc...) asparagine glycosylation sites follow: Asn198, Asn267, and Asn307. Asp315 is a catalytic residue. Asn345 carries an N-linked (GlcNAc...) asparagine glycan.

Belongs to the peptidase A1 family.

It localises to the secreted. The enzyme catalyses Similar to pepsin, but also cleaves on either side of Asp and at Lys-|-Arg.. With respect to regulation, inhibited by pepstatin and by diazoacetyl-D,L-norleucine methyl ester (DAN) in the presence of Cu(2+) ions. Its function is as follows. Extracellular proteinase found in the pitcher fluid of carnivorous plants. Digest prey for nitrogen uptake. This is Aspartic proteinase nepenthesin-1 (nep1) from Nepenthes gracilis (Slender pitcher plant).